A 347-amino-acid polypeptide reads, in one-letter code: Protein pelota homolog (347 aa).

It belongs to the eukaryotic release factor 1 family. Pelota subfamily. Monomer. A divalent metal cation serves as cofactor.

The protein localises to the cytoplasm. Functionally, may function in recognizing stalled ribosomes, interact with stem-loop structures in stalled mRNA molecules, and effect endonucleolytic cleavage of the mRNA. May play a role in the release non-functional ribosomes and degradation of damaged mRNAs. Has endoribonuclease activity. The polypeptide is Protein pelota homolog (Methanococcoides burtonii (strain DSM 6242 / NBRC 107633 / OCM 468 / ACE-M)).